Consider the following 229-residue polypeptide: GTP cyclohydrolase 1 (229 aa).

Zn(2+)-binding residues include cysteine 116, histidine 119, and cysteine 187.

This sequence belongs to the GTP cyclohydrolase I family. In terms of assembly, toroid-shaped homodecamer, composed of two pentamers of five dimers.

The enzyme catalyses GTP + H2O = 7,8-dihydroneopterin 3'-triphosphate + formate + H(+). Its pathway is cofactor biosynthesis; 7,8-dihydroneopterin triphosphate biosynthesis; 7,8-dihydroneopterin triphosphate from GTP: step 1/1. The polypeptide is GTP cyclohydrolase 1 (Synechococcus sp. (strain JA-3-3Ab) (Cyanobacteria bacterium Yellowstone A-Prime)).